A 199-amino-acid chain; its full sequence is Molybdenum cofactor guanylyltransferase (199 aa).

GTP contacts are provided by residues 12 to 14, Lys25, Asn53, Asp71, and Asp101; that span reads LAG. Asp101 is a binding site for Mg(2+).

The protein belongs to the MobA family. In terms of assembly, monomer. Mg(2+) is required as a cofactor.

The protein localises to the cytoplasm. The catalysed reaction is Mo-molybdopterin + GTP + H(+) = Mo-molybdopterin guanine dinucleotide + diphosphate. In terms of biological role, transfers a GMP moiety from GTP to Mo-molybdopterin (Mo-MPT) cofactor (Moco or molybdenum cofactor) to form Mo-molybdopterin guanine dinucleotide (Mo-MGD) cofactor. The sequence is that of Molybdenum cofactor guanylyltransferase from Cupriavidus necator (strain ATCC 17699 / DSM 428 / KCTC 22496 / NCIMB 10442 / H16 / Stanier 337) (Ralstonia eutropha).